The primary structure comprises 230 residues: 2,3-bisphosphoglycerate-dependent phosphoglycerate mutase (230 aa).

Residues 8–15 (RHGQSEWN), 21–22 (TG), R60, 87–90 (ERHY), K98, 114–115 (RR), and 183–184 (GN) each bind substrate. The active-site Tele-phosphohistidine intermediate is the H9. The active-site Proton donor/acceptor is E87.

The protein belongs to the phosphoglycerate mutase family. BPG-dependent PGAM subfamily.

The catalysed reaction is (2R)-2-phosphoglycerate = (2R)-3-phosphoglycerate. Its pathway is carbohydrate degradation; glycolysis; pyruvate from D-glyceraldehyde 3-phosphate: step 3/5. Catalyzes the interconversion of 2-phosphoglycerate and 3-phosphoglycerate. In Lactobacillus acidophilus (strain ATCC 700396 / NCK56 / N2 / NCFM), this protein is 2,3-bisphosphoglycerate-dependent phosphoglycerate mutase.